A 523-amino-acid polypeptide reads, in one-letter code: UDP-glucuronosyltransferase 3A1 (523 aa).

The first 22 residues, 1–22, serve as a signal peptide directing secretion; the sequence is MAGQQALLLFGFILPGLLFSEA. Over 23-483 the chain is Extracellular; sequence AKILTVSLVG…HAFQQPWYEQ (461 aa). An N-linked (GlcNAc...) asparagine glycan is attached at asparagine 52. Residues 484–504 traverse the membrane as a helical segment; that stretch reads YLLDVFLFLLVVTLGTMWLCG. Residues 505 to 523 lie on the Cytoplasmic side of the membrane; sequence KLLGLVARWLCGARKLKKA.

It belongs to the UDP-glycosyltransferase family.

It localises to the membrane. The catalysed reaction is glucuronate acceptor + UDP-alpha-D-glucuronate = acceptor beta-D-glucuronoside + UDP + H(+). UDP-glucuronosyltransferases catalyze phase II biotransformation reactions in which lipophilic substrates are conjugated with glucuronic acid to increase water solubility and enhance excretion. They are of major importance in the conjugation and subsequent elimination of potentially toxic xenobiotics and endogenous compounds. The protein is UDP-glucuronosyltransferase 3A1 (UGT3A1) of Bos taurus (Bovine).